The chain runs to 702 residues: Ferrioxamine B receptor (702 aa).

The signal sequence occupies residues 1–30; it reads MPLEMFMFATTRMALLIGGAIGGATFPLFA. Residues 55–168 enclose the TBDR plug domain; that stretch reads PDIETPQSVS…PGGIVALTSR (114 aa). The TBDR beta-barrel domain occupies 173-702; sequence DAGGEVKLFA…SIVGSVSWAF (530 aa).

This sequence belongs to the TonB-dependent receptor family.

It localises to the cell outer membrane. Its function is as follows. Ferrioxamine binding and uptake, in association with the TonB protein. May play a role in intestinal colonization. This Salmonella typhimurium (strain SL1344) protein is Ferrioxamine B receptor (foxA).